The primary structure comprises 76 residues: Defensin-like protein 122 (76 aa).

The signal sequence occupies residues 1–25 (MSKTTVIAIFMVVLVLGLVTKETQG). 4 disulfides stabilise this stretch: Cys-29/Cys-74, Cys-39/Cys-60, Cys-44/Cys-68, and Cys-48/Cys-70.

It belongs to the DEFL family. In terms of tissue distribution, expressed in flower buds, but not in stems, roots or rosette leaves.

Its subcellular location is the secreted. This is Defensin-like protein 122 (LCR30) from Arabidopsis thaliana (Mouse-ear cress).